A 208-amino-acid polypeptide reads, in one-letter code: RNA-binding protein KhpB (208 aa).

The interval 5–55 is jag_N domain; the sequence is TAAGRNVDEAVQSGLQELGLTKDKVEITVIEEGNKGFLGIFGKKPAIVKLV. The KH domain maps to 58-135; sequence IDPIQQAKLY…GQYKNVTVDA (78 aa). Residues 140 to 208 form the R3H domain; the sequence is LKRKETLSQL…NRHLVISHKR (69 aa).

This sequence belongs to the KhpB RNA-binding protein family. Forms a complex with KhpA.

The protein localises to the cytoplasm. Functionally, a probable RNA chaperone. Forms a complex with KhpA which binds to cellular RNA and controls its expression. Plays a role in peptidoglycan (PG) homeostasis and cell length regulation. The polypeptide is RNA-binding protein KhpB (Bacillus subtilis (strain 168)).